A 290-amino-acid chain; its full sequence is MSNSYLAFPKFDPVIFSIGPVSLHWYGLMYLVGFVFAMWLAVRRANKPGSGWTKEEVENLLYAGFLGVFIGGRVGYVLFYNLPMFLDNPLYLFKVWDGGMSFHGGLIGVICVMLWFARRTKRNFFQVADFIAPLIPFGLGAGRLGNFINAELWGRVTTDTPWAMLFPTSRNTDIAIVAADPAKWQAIFNQYGVLPRHPSQLYEMILEGVVLFIILNVFIRKPRPMGSVSGLFLIGYGTFRIIVECFRQPDEQLGLFEGMISMGQILSVPMILAGIIMMIWAYRRPTQKLS.

7 helical membrane passes run 21–41 (VSLHWYGLMYLVGFVFAMWLA), 60–80 (LLYAGFLGVFIGGRVGYVLFY), 96–116 (WDGGMSFHGGLIGVICVMLWF), 124–144 (FFQVADFIAPLIPFGLGAGRL), 199–219 (SQLYEMILEGVVLFIILNVFI), 226–246 (GSVSGLFLIGYGTFRIIVECF), and 260–280 (ISMGQILSVPMILAGIIMMIW). R143 is a binding site for a 1,2-diacyl-sn-glycero-3-phospho-(1'-sn-glycerol).

It belongs to the Lgt family.

It is found in the cell inner membrane. The enzyme catalyses L-cysteinyl-[prolipoprotein] + a 1,2-diacyl-sn-glycero-3-phospho-(1'-sn-glycerol) = an S-1,2-diacyl-sn-glyceryl-L-cysteinyl-[prolipoprotein] + sn-glycerol 1-phosphate + H(+). The protein operates within protein modification; lipoprotein biosynthesis (diacylglyceryl transfer). Functionally, catalyzes the transfer of the diacylglyceryl group from phosphatidylglycerol to the sulfhydryl group of the N-terminal cysteine of a prolipoprotein, the first step in the formation of mature lipoproteins. This chain is Phosphatidylglycerol--prolipoprotein diacylglyceryl transferase, found in Yersinia pseudotuberculosis serotype O:1b (strain IP 31758).